A 548-amino-acid polypeptide reads, in one-letter code: CTP synthase (548 aa).

The interval 1-276 (MPTELTDYDP…DQYVMEQLGL (276 aa)) is amidoligase domain. S25 is a CTP binding site. S25 is a binding site for UTP. ATP is bound at residue 26–31 (GLGKGI). Y66 contacts L-glutamine. Residue D83 participates in ATP binding. Mg(2+) contacts are provided by D83 and E151. Residues 158 to 160 (DIE), 197 to 202 (KTKPTQ), and K233 contribute to the CTP site. UTP-binding positions include 197–202 (KTKPTQ) and K233. Residues 303-541 (DIALVGKYAM…VETILETTDT (239 aa)) enclose the Glutamine amidotransferase type-1 domain. G363 contributes to the L-glutamine binding site. Residue C390 is the Nucleophile; for glutamine hydrolysis of the active site. L-glutamine-binding positions include 391-394 (LGFQ), E414, and R471. Residues H514 and E516 contribute to the active site.

This sequence belongs to the CTP synthase family. As to quaternary structure, homotetramer.

The enzyme catalyses UTP + L-glutamine + ATP + H2O = CTP + L-glutamate + ADP + phosphate + 2 H(+). The catalysed reaction is L-glutamine + H2O = L-glutamate + NH4(+). It catalyses the reaction UTP + NH4(+) + ATP = CTP + ADP + phosphate + 2 H(+). The protein operates within pyrimidine metabolism; CTP biosynthesis via de novo pathway; CTP from UDP: step 2/2. With respect to regulation, allosterically activated by GTP, when glutamine is the substrate; GTP has no effect on the reaction when ammonia is the substrate. The allosteric effector GTP functions by stabilizing the protein conformation that binds the tetrahedral intermediate(s) formed during glutamine hydrolysis. Inhibited by the product CTP, via allosteric rather than competitive inhibition. Its function is as follows. Catalyzes the ATP-dependent amination of UTP to CTP with either L-glutamine or ammonia as the source of nitrogen. Regulates intracellular CTP levels through interactions with the four ribonucleotide triphosphates. In Natronomonas pharaonis (strain ATCC 35678 / DSM 2160 / CIP 103997 / JCM 8858 / NBRC 14720 / NCIMB 2260 / Gabara) (Halobacterium pharaonis), this protein is CTP synthase.